Consider the following 155-residue polypeptide: Cathelicidin-1 (155 aa).

The N-terminal stretch at 1–29 (METPRASLSLGRWSLWLLLLGLALPSASA) is a signal peptide. Position 30 is a pyrrolidone carboxylic acid (Gln-30). Positions 30–143 (QALSYREAVL…KQPWAPPQAA (114 aa)) are excised as a propeptide. Intrachain disulfides connect Cys-85/Cys-96, Cys-107/Cys-124, and Cys-146/Cys-154.

This sequence belongs to the cathelicidin family. Large granules of neutrophils.

It localises to the secreted. Potent microbicidal activity; active against S.aureus and E.coli. The chain is Cathelicidin-1 (CATHL1) from Bos taurus (Bovine).